The primary structure comprises 427 residues: Putative F-box protein At4g10740 (427 aa).

An F-box domain is found at 2 to 47 (RTTMSNLPKELVEDIVSRVPLHCLRAMRLTCKNWNALLESQSFKKM).

The polypeptide is Putative F-box protein At4g10740 (Arabidopsis thaliana (Mouse-ear cress)).